Consider the following 201-residue polypeptide: Ribonuclease HII (201 aa).

In terms of domain architecture, RNase H type-2 spans 12–201; that stretch reads GIVCGIDEVG…FAPVAQYMLF (190 aa). Residues aspartate 18, glutamate 19, and aspartate 113 each coordinate a divalent metal cation.

This sequence belongs to the RNase HII family. Mn(2+) serves as cofactor. The cofactor is Mg(2+).

It is found in the cytoplasm. The enzyme catalyses Endonucleolytic cleavage to 5'-phosphomonoester.. Endonuclease that specifically degrades the RNA of RNA-DNA hybrids. In Paramagnetospirillum magneticum (strain ATCC 700264 / AMB-1) (Magnetospirillum magneticum), this protein is Ribonuclease HII (rnhB).